A 1005-amino-acid polypeptide reads, in one-letter code: MEKQRALVAAKDGDVATLERLLEAGALGPGITDALGAGLVHHATRAGHLDCVKFLVQRAQLPGNQRAHNGATPAHDAAATGSLAELCWLVREGGCGLQDQDASGVSPLHLAARFGHPVLVEWLLHEGHSATLETREGARPLHHAAVSGDLTCLKLLTAAHGSSVNRRTRSGASPLYLACQEGHLHLAQFLVKDCGADVHLRALDGMSALHAAAARGHYSLVVWLVTFTDIGLTARDNEGATALHFAARGGHTPILDRLLLMGTPILRDSWGGTPLHDAAENGQMECCQTLVSHHVDPSLRDEDGYTAADLAEYHGHRDCAQYLREVAQPVPLLMTPPPPPFPPPPLLATRRSLEDGRRGGPGPGNPSPMSLSPAWPGHPDQPLPREQMTSPAPPRIITSATADPEGTETALAGDTSDGLAALQLDGLPSGDIDGLVPTRDERGQPIPEWKRQVMVRKLQARLGAESSAEAQDNGGSSGPTEQAAWRYSQTHQAILGPFGELLTEDDLVYLEKQIADLQLRRRCQEYESELGRLAAELQALLPEPLVSITVNSHFLPRAPGLEVEEASIPAAEPAGSAEASEVAPGVQPLPFWCSHISRLVRSLSLLLKGVHGLVQGDEKPSTRPLQDTCREASASPPRSEAQRQIQEWGVSVRTLRGNFESASGPLCGFNPGPCEPGAQHRQCLSGCWPALPKPRSGLASGEPRPGDTEEASDSGISCEEVPSEAGAAAGPDLASLRKERIIMLFLSHWRRSAYTPALKTVACRTLGARHAGLRGQEAARSPGPPSPPSEGPRLGHLWQQRSTITHLLGNWKAIMAHVPARQLRRLSRQPRGALSPEQFLPHVDGAPVPYSSLSLDLFMLGYFQLLECDLPAEERKLRHLLCFEVFEHLGTHGWEAVRAFHKAVTDEVAAGRRAWTDGFEDIKARFFGSSQRPAWDTEPGRKSGLTLLGPLPHAAVPCSGPEPTAQRLGSRSQQGSFNGEDICGYINRSFAFWKEKEAEMFNFGE.

ANK repeat units lie at residues 1 to 31 (MEKQ…GPGI), 35 to 64 (LGAG…LPGN), 69 to 99 (NGAT…GLQD), 103 to 132 (SGVS…SATL), 136 to 166 (EGAR…SVNR), 170 to 200 (SGAS…DVHL), 204 to 234 (DGMS…GLTA), 238 to 267 (EGAT…PILR), and 270 to 299 (WGGT…DPSL). Disordered regions lie at residues 333 to 444 (LMTP…ERGQ) and 462 to 483 (LGAE…TEQA). Residues 334–346 (MTPPPPPFPPPPL) are compositionally biased toward pro residues. A compositionally biased stretch (polar residues) spans 468-480 (AEAQDNGGSSGPT). Residues 517 to 541 (LQLRRRCQEYESELGRLAAELQALL) are a coiled coil. Disordered stretches follow at residues 616–644 (GDEK…AQRQ), 695–730 (RSGL…AAAG), and 773–795 (LRGQ…PRLG).

Interacts with MYO3A (via C-terminus). Interacts with MYO3B (via C-terminus).

It is found in the cell projection. The protein localises to the stereocilium. In terms of biological role, binds to but does not cross-link actin. Required for the formation and maintenance of inner ear hair cell stereocilia and staircase formation. Essential for normal hearing. In Homo sapiens (Human), this protein is Espin-like protein (ESPNL).